The primary structure comprises 151 residues: Chaperonin GroEL (151 aa).

41 to 45 (DGTTT) serves as a coordination point for ATP.

Belongs to the chaperonin (HSP60) family. In terms of assembly, forms a cylinder of 14 subunits composed of two heptameric rings stacked back-to-back. Interacts with the co-chaperonin GroES.

The protein localises to the cytoplasm. The enzyme catalyses ATP + H2O + a folded polypeptide = ADP + phosphate + an unfolded polypeptide.. Its function is as follows. Together with its co-chaperonin GroES, plays an essential role in assisting protein folding. The GroEL-GroES system forms a nano-cage that allows encapsulation of the non-native substrate proteins and provides a physical environment optimized to promote and accelerate protein folding. The sequence is that of Chaperonin GroEL from Mycobacteroides chelonae (Mycobacterium chelonae).